The following is a 363-amino-acid chain: Thioredoxin domain-containing protein C13F5.05, mitochondrial (363 aa).

The N-terminal 24 residues, 1–24, are a transit peptide targeting the mitochondrion; sequence MLFRIPTLFTLFLACFSLVSGVFG. In terms of domain architecture, Thioredoxin spans 32–141; sequence NTIELNSKNF…KSLQKFVSDS (110 aa).

Its subcellular location is the mitochondrion. The protein is Thioredoxin domain-containing protein C13F5.05, mitochondrial of Schizosaccharomyces pombe (strain 972 / ATCC 24843) (Fission yeast).